The sequence spans 920 residues: 2-oxoadipate dehydrogenase complex component E1 (920 aa).

The segment at 299–322 is disordered; it reads QGKTRGRQQVKQDGDYSTDPHSRP. Residues 308 to 322 are compositionally biased toward basic and acidic residues; the sequence is VKQDGDYSTDPHSRP.

Belongs to the alpha-ketoglutarate dehydrogenase family. The 2-oxoadipate dehydrogenase complex is composed of OADH (2-oxoadipate dehydrogenase; E1a), DLST (dihydrolipoamide succinyltransferase; E2) and DLD (dihydrolipoamide dehydrogenase; E3). E1a functional unit is a dimer. Thiamine diphosphate serves as cofactor.

It localises to the mitochondrion. The enzyme catalyses N(6)-[(R)-lipoyl]-L-lysyl-[protein] + 2-oxoadipate + H(+) = N(6)-[(R)-S(8)-glutaryldihydrolipoyl]-L-lysyl-[protein] + CO2. Its pathway is amino-acid degradation. In terms of biological role, 2-oxoadipate dehydrogenase (E1a) component of the 2-oxoadipate dehydrogenase complex (OADHC). Participates in the first step, rate limiting for the overall conversion of 2-oxoadipate (alpha-ketoadipate) to glutaryl-CoA and CO(2) catalyzed by the whole OADHC. Catalyzes the irreversible decarboxylation of 2-oxoadipate via the thiamine diphosphate (ThDP) cofactor and subsequent transfer of the decarboxylated acyl intermediate on an oxidized dihydrolipoyl group that is covalently amidated to the E2 enzyme (dihydrolipoyllysine-residue succinyltransferase or DLST). Can catalyze the decarboxylation of 2-oxoglutarate in vitro, but at a much lower rate than 2-oxoadipate. Responsible for the last step of L-lysine, L-hydroxylysine and L-tryptophan catabolism with the common product being 2-oxoadipate. This chain is 2-oxoadipate dehydrogenase complex component E1 (dhtkd1), found in Danio rerio (Zebrafish).